Consider the following 110-residue polypeptide: MGQNDLVKTLRMNYLFDFYQSLLTNKQRNYLELFYLEDYSLSEIADTFNVSRQAVYDNIRRTGDLVEDYEKKLELYQKFEQRREIYDEMKKHLSNPEQIQRYIQQLEDLE.

This sequence belongs to the UPF0122 family.

Its function is as follows. Might take part in the signal recognition particle (SRP) pathway. This is inferred from the conservation of its genetic proximity to ftsY/ffh. May be a regulatory protein. This chain is UPF0122 protein SAR1212, found in Staphylococcus aureus (strain MRSA252).